Here is a 308-residue protein sequence, read N- to C-terminus: Aspartate carbamoyltransferase catalytic subunit (308 aa).

Carbamoyl phosphate-binding residues include Arg55 and Thr56. Lys83 serves as a coordination point for L-aspartate. Positions 105, 133, and 136 each coordinate carbamoyl phosphate. Positions 166 and 220 each coordinate L-aspartate. Carbamoyl phosphate contacts are provided by Gly261 and Pro262.

It belongs to the aspartate/ornithine carbamoyltransferase superfamily. ATCase family. Heterododecamer (2C3:3R2) of six catalytic PyrB chains organized as two trimers (C3), and six regulatory PyrI chains organized as three dimers (R2).

The enzyme catalyses carbamoyl phosphate + L-aspartate = N-carbamoyl-L-aspartate + phosphate + H(+). The protein operates within pyrimidine metabolism; UMP biosynthesis via de novo pathway; (S)-dihydroorotate from bicarbonate: step 2/3. Catalyzes the condensation of carbamoyl phosphate and aspartate to form carbamoyl aspartate and inorganic phosphate, the committed step in the de novo pyrimidine nucleotide biosynthesis pathway. In Chlorobium phaeobacteroides (strain DSM 266 / SMG 266 / 2430), this protein is Aspartate carbamoyltransferase catalytic subunit.